A 160-amino-acid chain; its full sequence is MTVSFRPTADLVDDIGPDVRSCDLQFRQLGGRTEFAGPISTVRCFQDNALLKSVLSEPGGGGVLVVDGGGSLHTALVGDVIAELARANGWAGLIVNGAVRDSAALRGMDIGVKALGTNPRKSTKTGAGERDVDITLGGVTFTPGDIAYSDDDGIVVAVGD.

Substrate-binding positions include glycine 78–isoleucine 81 and arginine 100. Residue aspartate 101 participates in a divalent metal cation binding.

It belongs to the class II aldolase/RraA-like family. In terms of assembly, homotrimer. A divalent metal cation serves as cofactor.

The enzyme catalyses 4-hydroxy-4-methyl-2-oxoglutarate = 2 pyruvate. It catalyses the reaction oxaloacetate + H(+) = pyruvate + CO2. In terms of biological role, catalyzes the aldol cleavage of 4-hydroxy-4-methyl-2-oxoglutarate (HMG) into 2 molecules of pyruvate. Also contains a secondary oxaloacetate (OAA) decarboxylase activity due to the common pyruvate enolate transition state formed following C-C bond cleavage in the retro-aldol and decarboxylation reactions. This is Putative 4-hydroxy-4-methyl-2-oxoglutarate aldolase from Mycolicibacterium paratuberculosis (strain ATCC BAA-968 / K-10) (Mycobacterium paratuberculosis).